The sequence spans 383 residues: 1-deoxy-D-xylulose 5-phosphate reductoisomerase (383 aa).

6 residues coordinate NADPH: Thr-10, Gly-11, Ser-12, Ile-13, Asn-38, and Asn-121. Lys-122 is a 1-deoxy-D-xylulose 5-phosphate binding site. Glu-123 is an NADPH binding site. Residue Asp-147 participates in Mn(2+) binding. The 1-deoxy-D-xylulose 5-phosphate site is built by Ser-148, Glu-149, Ser-172, and His-195. Glu-149 is a binding site for Mn(2+). Gly-201 is a binding site for NADPH. Residues Ser-208, Asn-213, Lys-214, and Glu-217 each coordinate 1-deoxy-D-xylulose 5-phosphate. Position 217 (Glu-217) interacts with Mn(2+).

Belongs to the DXR family. It depends on Mg(2+) as a cofactor. Mn(2+) is required as a cofactor.

The enzyme catalyses 2-C-methyl-D-erythritol 4-phosphate + NADP(+) = 1-deoxy-D-xylulose 5-phosphate + NADPH + H(+). The protein operates within isoprenoid biosynthesis; isopentenyl diphosphate biosynthesis via DXP pathway; isopentenyl diphosphate from 1-deoxy-D-xylulose 5-phosphate: step 1/6. Functionally, catalyzes the NADPH-dependent rearrangement and reduction of 1-deoxy-D-xylulose-5-phosphate (DXP) to 2-C-methyl-D-erythritol 4-phosphate (MEP). This Ruthia magnifica subsp. Calyptogena magnifica protein is 1-deoxy-D-xylulose 5-phosphate reductoisomerase.